Consider the following 202-residue polypeptide: Transmembrane gamma-carboxyglutamic acid protein 2 (202 aa).

A signal peptide spans 1-23 (MRGHPSLLLLYMALTTCLDTSPS). Positions 24–49 (EETDQEVFLGPPEAQSFLSSHTRIPR) are excised as a propeptide. The Gla domain maps to 50 to 96 (ANHWDLELLTPGNLERECLEERCSWEEAREYFEDNTLTERFWESYIY). Over 50 to 109 (ANHWDLELLTPGNLERECLEERCSWEEAREYFEDNTLTERFWESYIYNGKGGRGRVDVAS) the chain is Extracellular. A disulfide bridge connects residues Cys-67 and Cys-72. 4-carboxyglutamate is present on Glu-70. The helical transmembrane segment at 110 to 130 (LAVGLTGGILLIVLAGLGAFW) threads the bilayer. Topologically, residues 131–202 (YLRWRQHRGQ…PPYTSLRRPH (72 aa)) are cytoplasmic. Residues 143-202 (CPQEAGLISPLSPLNPLGPPTPLPPPPPPPPGLPTYEQALAASGVHDAPPPPYTSLRRPH) are disordered. Positions 158-175 (PLGPPTPLPPPPPPPPGL) are enriched in pro residues. Residues 175 to 178 (LPTY) carry the LPXY motif; mediates binding to WW domain-containing proteins motif. The PPXY motif; mediates binding to WW domain-containing proteins signature appears at 192–195 (PPPY).

Interacts with NEDD4. Interacts (via cytoplasmic domain) with transcriptional coactivator YAP1. Post-translationally, gamma-carboxyglutamate residues are formed by vitamin K dependent carboxylation. These residues are essential for the binding of calcium. In terms of tissue distribution, widely expressed with highest levels in kidney. Also highly expressed in the thyroid.

The protein resides in the cell membrane. In Homo sapiens (Human), this protein is Transmembrane gamma-carboxyglutamic acid protein 2.